The chain runs to 191 residues: MKKQLLSALIGVSLLAPMAASAADYVIDTEGAHASITFKVNHLGYSYVVGRFNDFSGDFSYDAAKPTAMTVNVTVNTLSVDSNHAERDKHIRGEDFLNTGKFAKATFASTSVEDKGNGDLVINGNLTLNGVTKPLAIKAHAVGEGQDPWGGYRAGFTGTTTFAMKDFGIKMDLGPASSHVELDLVVEGVRK.

The first 22 residues, 1–22, serve as a signal peptide directing secretion; the sequence is MKKQLLSALIGVSLLAPMAASA.

Belongs to the UPF0312 family. Type 1 subfamily.

It is found in the periplasm. The protein is UPF0312 protein Sputcn32_2702 of Shewanella putrefaciens (strain CN-32 / ATCC BAA-453).